Reading from the N-terminus, the 566-residue chain is Arginine--tRNA ligase (566 aa).

Residues 123–133 (PNIAKPFHIGH) carry the 'HIGH' region motif.

This sequence belongs to the class-I aminoacyl-tRNA synthetase family. In terms of assembly, monomer.

It is found in the cytoplasm. It catalyses the reaction tRNA(Arg) + L-arginine + ATP = L-arginyl-tRNA(Arg) + AMP + diphosphate. This Clostridioides difficile (strain 630) (Peptoclostridium difficile) protein is Arginine--tRNA ligase.